The sequence spans 393 residues: Cell division protein FtsZ 2 (393 aa).

Residues 1–28 (MQDIVQDALDNAEAEQREMDGDGDGDEF) form a disordered region. GTP-binding positions include 40-44 (GAGNN), 127-129 (GTG), Glu158, Arg161, and Asp204. The segment at 339-393 (GPSTQKQADKSRRELQDVDSKQRAADDAGAGGFGGAHSDGGQDEVEQENGLDVIR) is disordered. The span at 345 to 364 (QADKSRRELQDVDSKQRAAD) shows a compositional bias: basic and acidic residues. A compositionally biased stretch (gly residues) spans 367–376 (GAGGFGGAHS).

This sequence belongs to the FtsZ family. Homodimer. Polymerizes to form a dynamic ring structure in a strictly GTP-dependent manner. Interacts directly with several other division proteins.

It localises to the cytoplasm. In terms of biological role, essential cell division protein that forms a contractile ring structure (Z ring) at the future cell division site. The regulation of the ring assembly controls the timing and the location of cell division. One of the functions of the FtsZ ring is to recruit other cell division proteins to the septum to produce a new cell wall between the dividing cells. Binds GTP and shows GTPase activity. Overexpression causes significant changes in cell morphology. The protein is Cell division protein FtsZ 2 of Halobacterium salinarum (strain ATCC 29341 / DSM 671 / R1).